Reading from the N-terminus, the 519-residue chain is Putative lipase ATG15 (519 aa).

Over 1–5 (MYIPG) the chain is Cytoplasmic. Residues 6 to 26 (PLRLSSYLLPFLSSPSPPAQS) traverse the membrane as a helical; Signal-anchor for type II membrane protein segment. Residues 27-519 (SPDTRTISFK…CYKWEFGEWN (493 aa)) are Lumenal-facing. N-linked (GlcNAc...) asparagine glycosylation is found at Asn48, Asn133, Asn196, Asn220, Asn302, and Asn309. The active-site Charge relay system is the Ser318. Asn361 carries N-linked (GlcNAc...) asparagine glycosylation. Residues 481-502 (RRGPKRQPGGEDPKHGGVPKPV) are disordered.

It belongs to the AB hydrolase superfamily. Lipase family. As to quaternary structure, binds to both phosphatidylinositol (PI) and phosphatidylinositol 3,5-bisphosphate (PIP2).

It is found in the endosome. The protein resides in the multivesicular body membrane. The protein localises to the prevacuolar compartment membrane. The catalysed reaction is a triacylglycerol + H2O = a diacylglycerol + a fatty acid + H(+). Its function is as follows. Lipase which is essential for lysis of subvacuolar cytoplasm to vacuole targeted bodies and intravacuolar autophagic bodies. Involved in the lysis of intravacuolar multivesicular body (MVB) vesicles. The intravacuolar membrane disintegration by ATG15 is critical to life span extension. The chain is Putative lipase ATG15 (ATG15) from Cryptococcus neoformans var. neoformans serotype D (strain B-3501A) (Filobasidiella neoformans).